An 853-amino-acid polypeptide reads, in one-letter code: MICAL-like protein 1 (853 aa).

A Calponin-homology (CH) domain is found at 2–108 (AGPRGALLAW…YVSQYYNHFA (107 aa)). Disordered regions lie at residues 118–162 (PRKG…TPSS) and 224–659 (SGRS…FPLI). Residues 145–162 (ECSSGSLSKQGSHRTPSS) show a composition bias toward polar residues. The LIM zinc-binding domain maps to 162–224 (STCAACQQHV…AEHCARLGPS (63 aa)). Residues serine 292 and serine 306 each carry the phosphoserine modification. Threonine 312 and threonine 315 each carry phosphothreonine. Residues 355–366 (LSERTPAPRKDP) show a composition bias toward basic and acidic residues. Over residues 381-394 (APLPPSSSPGPPPG) the composition is skewed to pro residues. Residue serine 388 is modified to Phosphoserine. An NPF1 motif is present at residues 419–421 (NPF). Over residues 429 to 445 (PAAPSPAPGPAPTPPES) the composition is skewed to pro residues. A phosphothreonine mark is found at threonine 457 and threonine 459. Phosphoserine occurs at positions 460, 461, 474, and 476. Composition is skewed to low complexity over residues 495 to 515 (PSPALSVESLSSESSSQAPSE) and 541 to 553 (SASLSANSSLSSS). 2 positions are modified to phosphoserine: serine 568 and serine 611. Residues 607 to 618 (PGTSSPQLQVKS) show a composition bias toward polar residues. The NPF2 motif lies at 623 to 625 (NPF). A mediates the interaction with RAB13 and RAB35 and intramolecular interaction with the CH domain region spans residues 642–853 (KGSKPARPPA…TKSKCPGDRS (212 aa)). The bMERB domain maps to 661-808 (RKVQSDQYIP…EEEEDKMLEA (148 aa)). A coiled-coil region spans residues 671-701 (EEDIHGEIDTIERQLDALEHRGVLLEEKLRG). The segment at 690-853 (HRGVLLEEKL…TKSKCPGDRS (164 aa)) is necessary and sufficient to associate with tubular recycling endosome membranes, mediate phosphatidic acid-binding and membrane tubulation. Serine 730 is modified (phosphoserine). A coiled-coil region spans residues 791-820 (CLDEDRQREEEEDKMLEAMIKKKEFQKETE).

Homooligomer. Interacts (via NPF1 motif) with EHD1 (via EH domain); the interaction is direct and probably recruits EHD1 to membranes. Interacts with EHD3 (via EH domain). Interacts with RAB35 (GTP-bound form); the interaction is direct and probably recruits MICALL1 to membranes. Interacts with ACAP2; the interaction is indirect through RAB35. Interacts with RAB8A (GTP-bound form); regulates RAB8A association with recycling endosomes. Interacts with RAB13 (GTP-bound form). Interacts with ARF6 (GTP-bound form). Interacts with PACSIN2 (via the SH3 domain). Interacts with DPYSL2.

It localises to the recycling endosome membrane. It is found in the late endosome membrane. Its subcellular location is the cell projection. The protein resides in the cilium membrane. The protein localises to the cytoplasm. It localises to the cytoskeleton. It is found in the microtubule organizing center. Its subcellular location is the centrosome. The protein resides in the centriole. Functionally, lipid-binding protein with higher affinity for phosphatidic acid, a lipid enriched in recycling endosome membranes. On endosome membranes, acts as a downstream effector of Rab proteins recruiting cytosolic proteins to regulate membrane tubulation. Involved in a late step of receptor-mediated endocytosis regulating for instance endocytosed-EGF receptor trafficking. Alternatively, regulates slow endocytic recycling of endocytosed proteins back to the plasma membrane. Also involved in cargo protein delivery to the plasma membrane. Plays a role in ciliogenesis coordination, recruits EHD1 to primary cilium where it is anchored to the centriole through interaction with tubulins. May indirectly play a role in neurite outgrowth. The chain is MICAL-like protein 1 (MICALL1) from Bos taurus (Bovine).